A 470-amino-acid polypeptide reads, in one-letter code: 6-phosphofructo-2-kinase/fructose-2,6-bisphosphatase (470 aa).

The tract at residues 1 to 249 is 6-phosphofructo-2-kinase; it reads MAAVASGQLT…VYYLMNTHVT (249 aa). Position 31 is a phosphoserine; by PKA (serine 31). 47-55 contacts ATP; that stretch reads GLRRPGKTY. 2 residues coordinate beta-D-fructose 6-phosphate: arginine 80 and arginine 104. Residue aspartate 130 is part of the active site. Residues threonine 132 and arginine 138 each coordinate beta-D-fructose 6-phosphate. Cysteine 160 is a catalytic residue. ATP is bound at residue 169–174; it reads NIKQVK. Beta-D-fructose 6-phosphate-binding residues include lysine 174, arginine 195, and tyrosine 199. Residues 250–469 form a fructose-2,6-bisphosphatase region; it reads PRAIYLSRHG…AEALVTVPEH (220 aa). Arginine 257 is a binding site for beta-D-fructose 2,6-bisphosphate. The active-site Tele-phosphohistidine intermediate is histidine 258. Residues asparagine 264 and glycine 270 each coordinate beta-D-fructose 2,6-bisphosphate. The active-site Proton donor/acceptor is glutamate 327. Tyrosine 338, arginine 352, lysine 356, tyrosine 367, glutamine 393, and arginine 397 together coordinate beta-D-fructose 2,6-bisphosphate. ATP is bound at residue 349–352; that stretch reads FALR. ATP-binding positions include 393-397 and tyrosine 429; that span reads QAVMR.

In the C-terminal section; belongs to the phosphoglycerate mutase family. In terms of assembly, homodimer. Liver.

It carries out the reaction beta-D-fructose 2,6-bisphosphate + H2O = beta-D-fructose 6-phosphate + phosphate. The enzyme catalyses beta-D-fructose 6-phosphate + ATP = beta-D-fructose 2,6-bisphosphate + ADP + H(+). With respect to regulation, phosphorylation results in inhibition of the kinase activity. Synthesis and degradation of fructose 2,6-bisphosphate. This chain is 6-phosphofructo-2-kinase/fructose-2,6-bisphosphatase, found in Gallus gallus (Chicken).